We begin with the raw amino-acid sequence, 441 residues long: Peroxisomal multifunctional enzyme A (441 aa).

Residues 1-302 are 3-hydroxyacyl-CoA dehydrogenase; it reads MALNFKDKVV…VNSKPADGES (302 aa). NAD(+) is bound by residues 11 to 35, I19, D38, 73 to 74, and N97; these read IVTGAGGGIGKVYALEFAKRGAKVV and SV. S149 lines the substrate pocket. Y162 (proton acceptor) is an active-site residue. Residues 162 to 166 and 194 to 197 each bind NAD(+); these read YGSMK and AASR. Residues 331–440 form the SCP2 domain; sequence ASKIFTTIQG…KLGALMQGSK (110 aa). Q412 is a substrate binding site.

This sequence belongs to the short-chain dehydrogenases/reductases (SDR) family.

The protein resides in the peroxisome. It carries out the reaction a (3S)-3-hydroxyacyl-CoA + NAD(+) = a 3-oxoacyl-CoA + NADH + H(+). Its pathway is lipid metabolism; fatty acid beta-oxidation. Enzyme acting on the peroxisomal beta-oxidation pathway for fatty acids. Protects the cells from the increase of the harmful xenobiotic fatty acids incorporated from their diets and optimizes cellular lipid composition for proper development. The chain is Peroxisomal multifunctional enzyme A (mfeA) from Dictyostelium discoideum (Social amoeba).